A 234-amino-acid polypeptide reads, in one-letter code: Octanoyltransferase (234 aa).

The 185-residue stretch at 50 to 234 (GEAPELVWLL…AFEQVFGPTR (185 aa)) folds into the BPL/LPL catalytic domain. Substrate contacts are provided by residues 88 to 95 (RGGQITYH), 163 to 165 (AIG), and 176 to 178 (GIA). C194 acts as the Acyl-thioester intermediate in catalysis.

The protein belongs to the LipB family.

The protein localises to the cytoplasm. The catalysed reaction is octanoyl-[ACP] + L-lysyl-[protein] = N(6)-octanoyl-L-lysyl-[protein] + holo-[ACP] + H(+). Its pathway is protein modification; protein lipoylation via endogenous pathway; protein N(6)-(lipoyl)lysine from octanoyl-[acyl-carrier-protein]: step 1/2. In terms of biological role, catalyzes the transfer of endogenously produced octanoic acid from octanoyl-acyl-carrier-protein onto the lipoyl domains of lipoate-dependent enzymes. Lipoyl-ACP can also act as a substrate although octanoyl-ACP is likely to be the physiological substrate. The protein is Octanoyltransferase of Rhodopseudomonas palustris (strain BisA53).